The chain runs to 210 residues: ATP-dependent Clp protease proteolytic subunit (210 aa).

Catalysis depends on Ser106, which acts as the Nucleophile. The active site involves His131.

Belongs to the peptidase S14 family. In terms of assembly, fourteen ClpP subunits assemble into 2 heptameric rings which stack back to back to give a disk-like structure with a central cavity, resembling the structure of eukaryotic proteasomes.

It is found in the cytoplasm. It carries out the reaction Hydrolysis of proteins to small peptides in the presence of ATP and magnesium. alpha-casein is the usual test substrate. In the absence of ATP, only oligopeptides shorter than five residues are hydrolyzed (such as succinyl-Leu-Tyr-|-NHMec, and Leu-Tyr-Leu-|-Tyr-Trp, in which cleavage of the -Tyr-|-Leu- and -Tyr-|-Trp bonds also occurs).. Functionally, cleaves peptides in various proteins in a process that requires ATP hydrolysis. Has a chymotrypsin-like activity. Plays a major role in the degradation of misfolded proteins. The polypeptide is ATP-dependent Clp protease proteolytic subunit (Bradyrhizobium sp. (strain BTAi1 / ATCC BAA-1182)).